Reading from the N-terminus, the 240-residue chain is tRNA pseudouridine synthase B (240 aa).

Asp54 acts as the Nucleophile in catalysis.

The protein belongs to the pseudouridine synthase TruB family. Type 1 subfamily.

The catalysed reaction is uridine(55) in tRNA = pseudouridine(55) in tRNA. Its function is as follows. Responsible for synthesis of pseudouridine from uracil-55 in the psi GC loop of transfer RNAs. The polypeptide is tRNA pseudouridine synthase B (Chlorobium phaeovibrioides (strain DSM 265 / 1930) (Prosthecochloris vibrioformis (strain DSM 265))).